We begin with the raw amino-acid sequence, 465 residues long: Cysteine--tRNA ligase (465 aa).

Cysteine 27 provides a ligand contact to Zn(2+). The 'HIGH' region signature appears at 29-39; it reads PTVYNFFHIGN. Positions 207, 232, and 236 each coordinate Zn(2+). The 'KMSKS' region signature appears at 264-268; that stretch reads KMSKS. ATP is bound at residue lysine 267.

This sequence belongs to the class-I aminoacyl-tRNA synthetase family. In terms of assembly, monomer. Requires Zn(2+) as cofactor.

It is found in the cytoplasm. The catalysed reaction is tRNA(Cys) + L-cysteine + ATP = L-cysteinyl-tRNA(Cys) + AMP + diphosphate. In Clostridium botulinum (strain ATCC 19397 / Type A), this protein is Cysteine--tRNA ligase.